Reading from the N-terminus, the 224-residue chain is UPF0173 metal-dependent hydrolase TON_1314 (224 aa).

It belongs to the UPF0173 family.

The polypeptide is UPF0173 metal-dependent hydrolase TON_1314 (Thermococcus onnurineus (strain NA1)).